The sequence spans 567 residues: Glutamine--tRNA ligase (567 aa).

The 'HIGH' region signature appears at 47 to 57 (PEPNGYLHIGH). ATP is bound by residues 48–50 (EPN) and 54–60 (HIGHAKS). L-glutamine-binding residues include aspartate 80 and tyrosine 225. ATP contacts are provided by residues threonine 244 and 274 to 275 (RL). Residues 281–285 (ITSKR) carry the 'KMSKS' region motif.

Belongs to the class-I aminoacyl-tRNA synthetase family. Monomer.

It localises to the cytoplasm. It carries out the reaction tRNA(Gln) + L-glutamine + ATP = L-glutaminyl-tRNA(Gln) + AMP + diphosphate. The chain is Glutamine--tRNA ligase from Pseudomonas putida (strain ATCC 47054 / DSM 6125 / CFBP 8728 / NCIMB 11950 / KT2440).